Here is a 297-residue protein sequence, read N- to C-terminus: Phospholipid scramblase 2 (297 aa).

Residues 1–72 (MRSWNSLFCL…NQPGRPEGVP (72 aa)) form a proline-rich domain (PRD) region. At 1–276 (MRSWNSLFCL…IQFPRDLDVK (276 aa)) the chain is on the cytoplasmic side. A Phosphothreonine; by PKC modification is found at T149. Residues C172, C173, C174, C176, and C177 are each lipidated (S-palmitoyl cysteine). Residues 277–293 (MKAVMIGACFLIDYMFF) form a helical membrane-spanning segment. The Extracellular portion of the chain corresponds to 294-297 (ERTR).

The protein belongs to the phospholipid scramblase family. Requires Ca(2+) as cofactor. Expression of isoform 1 seems restricted to testis.

The protein localises to the membrane. It localises to the nucleus. It carries out the reaction a 1,2-diacyl-sn-glycero-3-phosphocholine(in) = a 1,2-diacyl-sn-glycero-3-phosphocholine(out). May catalyze calcium-induced ATP-independent rapid bidirectional and non-specific movement of phospholipids (lipid scrambling or lipid flip-flop) between the inner and outer leaflet of the plasma membrane. Its function is as follows. Has no phospholipid scramblase activity, due to the lack of a N-terminal proline-rich domain. In Homo sapiens (Human), this protein is Phospholipid scramblase 2.